The primary structure comprises 985 residues: Bifunctional glutamine synthetase adenylyltransferase/adenylyl-removing enzyme (985 aa).

The tract at residues 1–460 (MSLPSLADFP…HFRQVIADPD (460 aa)) is adenylyl removase. Residues 476-985 (GGEWLPLWEE…MRIWAQMGLS (510 aa)) are adenylyl transferase.

Belongs to the GlnE family. Requires Mg(2+) as cofactor.

It catalyses the reaction [glutamine synthetase]-O(4)-(5'-adenylyl)-L-tyrosine + phosphate = [glutamine synthetase]-L-tyrosine + ADP. The enzyme catalyses [glutamine synthetase]-L-tyrosine + ATP = [glutamine synthetase]-O(4)-(5'-adenylyl)-L-tyrosine + diphosphate. In terms of biological role, involved in the regulation of glutamine synthetase GlnA, a key enzyme in the process to assimilate ammonia. When cellular nitrogen levels are high, the C-terminal adenylyl transferase (AT) inactivates GlnA by covalent transfer of an adenylyl group from ATP to specific tyrosine residue of GlnA, thus reducing its activity. Conversely, when nitrogen levels are low, the N-terminal adenylyl removase (AR) activates GlnA by removing the adenylyl group by phosphorolysis, increasing its activity. The regulatory region of GlnE binds the signal transduction protein PII (GlnB) which indicates the nitrogen status of the cell. In Pseudomonas syringae pv. tomato (strain ATCC BAA-871 / DC3000), this protein is Bifunctional glutamine synthetase adenylyltransferase/adenylyl-removing enzyme.